The sequence spans 204 residues: dTTP/UTP pyrophosphatase (204 aa).

Aspartate 68 serves as the catalytic Proton acceptor.

This sequence belongs to the Maf family. YhdE subfamily. A divalent metal cation serves as cofactor.

It localises to the cytoplasm. The catalysed reaction is dTTP + H2O = dTMP + diphosphate + H(+). The enzyme catalyses UTP + H2O = UMP + diphosphate + H(+). Its function is as follows. Nucleoside triphosphate pyrophosphatase that hydrolyzes dTTP and UTP. May have a dual role in cell division arrest and in preventing the incorporation of modified nucleotides into cellular nucleic acids. The chain is dTTP/UTP pyrophosphatase from Thermotoga maritima (strain ATCC 43589 / DSM 3109 / JCM 10099 / NBRC 100826 / MSB8).